We begin with the raw amino-acid sequence, 344 residues long: Serpentine receptor class alpha-27 (344 aa).

A run of 7 helical transmembrane segments spans residues 28-48, 67-87, 128-148, 157-177, 203-223, 252-272, and 287-307; these read SIWM…TFYL, QILL…FLEI, GLLS…TVYV, MLIT…YGGV, AIFW…LLNI, ICSV…ALAI, and INIQ…VLIY.

It belongs to the nematode receptor-like protein sra family.

The protein resides in the membrane. The chain is Serpentine receptor class alpha-27 (sra-27) from Caenorhabditis elegans.